The primary structure comprises 223 residues: Ribonuclease HII (223 aa).

Positions Leu32–Ser223 constitute an RNase H type-2 domain. Positions 38, 39, and 130 each coordinate a divalent metal cation.

Belongs to the RNase HII family. It depends on Mn(2+) as a cofactor. Mg(2+) serves as cofactor.

The protein localises to the cytoplasm. The enzyme catalyses Endonucleolytic cleavage to 5'-phosphomonoester.. Endonuclease that specifically degrades the RNA of RNA-DNA hybrids. This chain is Ribonuclease HII, found in Bartonella henselae (strain ATCC 49882 / DSM 28221 / CCUG 30454 / Houston 1) (Rochalimaea henselae).